The sequence spans 286 residues: Acetylglutamate kinase (286 aa).

Residues 69 to 70, Arg-91, and Asn-185 each bind substrate; that span reads GG.

This sequence belongs to the acetylglutamate kinase family. ArgB subfamily.

The protein resides in the cytoplasm. It catalyses the reaction N-acetyl-L-glutamate + ATP = N-acetyl-L-glutamyl 5-phosphate + ADP. Its pathway is amino-acid biosynthesis; L-arginine biosynthesis; N(2)-acetyl-L-ornithine from L-glutamate: step 2/4. Functionally, catalyzes the ATP-dependent phosphorylation of N-acetyl-L-glutamate. In Chlorobium chlorochromatii (strain CaD3), this protein is Acetylglutamate kinase.